The sequence spans 164 residues: MQKQHQRQHKVELVANLKSQFADAKALLICDYKGLSVRKLEALRNKARNQGIKVQVIKNTLAHIAMKETGYSDLDLKETNVFLWGGDQIALSKLVFDFQKEHKDHFVLKAGLFDKESVSVAHVEAVSKLPSKEELMGMLLSVWTAPARYFVTGLDNLRKAKEEN.

It belongs to the universal ribosomal protein uL10 family. Part of the ribosomal stalk of the 50S ribosomal subunit. The N-terminus interacts with L11 and the large rRNA to form the base of the stalk. The C-terminus forms an elongated spine to which L12 dimers bind in a sequential fashion forming a multimeric L10(L12)X complex.

In terms of biological role, forms part of the ribosomal stalk, playing a central role in the interaction of the ribosome with GTP-bound translation factors. The sequence is that of Large ribosomal subunit protein uL10 (rplJ) from Helicobacter pylori (strain ATCC 700392 / 26695) (Campylobacter pylori).